The following is a 185-amino-acid chain: Orotate phosphoribosyltransferase (185 aa).

Residues arginine 98, lysine 99, lysine 102, histidine 104, and 128 to 136 (EDVTTTGGS) each bind 5-phospho-alpha-D-ribose 1-diphosphate. Orotate contacts are provided by threonine 132 and arginine 160.

The protein belongs to the purine/pyrimidine phosphoribosyltransferase family. PyrE subfamily. Homodimer. The cofactor is Mg(2+).

It catalyses the reaction orotidine 5'-phosphate + diphosphate = orotate + 5-phospho-alpha-D-ribose 1-diphosphate. It participates in pyrimidine metabolism; UMP biosynthesis via de novo pathway; UMP from orotate: step 1/2. Functionally, catalyzes the transfer of a ribosyl phosphate group from 5-phosphoribose 1-diphosphate to orotate, leading to the formation of orotidine monophosphate (OMP). This is Orotate phosphoribosyltransferase from Bradyrhizobium sp. (strain BTAi1 / ATCC BAA-1182).